We begin with the raw amino-acid sequence, 356 residues long: Alanine racemase (356 aa).

Lys-35 functions as the Proton acceptor; specific for D-alanine in the catalytic mechanism. Lys-35 is modified (N6-(pyridoxal phosphate)lysine). Arg-130 is a binding site for substrate. Tyr-253 functions as the Proton acceptor; specific for L-alanine in the catalytic mechanism. Met-301 serves as a coordination point for substrate.

Belongs to the alanine racemase family. The cofactor is pyridoxal 5'-phosphate.

It carries out the reaction L-alanine = D-alanine. It functions in the pathway amino-acid biosynthesis; D-alanine biosynthesis; D-alanine from L-alanine: step 1/1. Its function is as follows. Catalyzes the interconversion of L-alanine and D-alanine. May also act on other amino acids. The chain is Alanine racemase (alr) from Paraburkholderia phytofirmans (strain DSM 17436 / LMG 22146 / PsJN) (Burkholderia phytofirmans).